The sequence spans 421 residues: Mannose-1-phosphate guanylyltransferase regulatory subunit alpha (421 aa).

The tract at residues 2–252 is substrate-binding domain; sequence LKAVILIGGP…EGCWSQIKSA (251 aa). GDP-alpha-D-mannose is bound by residues Glu-85 and Gln-248. The hexapeptide repeat domain stretch occupies residues 274 to 421; it reads LASTKEGGPT…SRSFKNQIIL (148 aa). Positions 357–385 are C-loop; that stretch reads TPSDPNPNDPYSKIDSETLFREGKLTPSI.

The protein belongs to the transferase hexapeptide repeat family. As to quaternary structure, component of the GMPPA-GMPPB mannose-1-phosphate guanylyltransferase complex composed of 4 gmppa subunits and 8 gmppb subunits; the complex is organized into three layers, a central layer made up of 2 gmppa dimers sandwiched between two layers each made up of 2 gmppb dimers.

It localises to the cytoplasm. Regulatory subunit of the GMPPA-GMPPB mannose-1-phosphate guanylyltransferase complex; reduces the catalytic activity of GMPPB when part of the complex. Mediates allosteric feedback inhibition of GMPPB catalytic activity upon binding GDP-alpha-D-mannose. Together with GMPPB regulates GDP-alpha-D-mannose levels. The chain is Mannose-1-phosphate guanylyltransferase regulatory subunit alpha (gmppa) from Xenopus tropicalis (Western clawed frog).